A 574-amino-acid chain; its full sequence is Developmental and secondary metabolism regulator veA (574 aa).

Disordered regions lie at residues 1-22 (MATRAPLAPPPNETEASVSRIT), 39-60 (ERARACGAGAKSSADRRPVDPP), 255-500 (RSSD…GAGK), and 513-540 (RSYEDSFGHDDRPLYNGMRPDTESYPRR). The region spanning 25-230 (GKKLTYKLNV…AEQGCRVRIR (206 aa)) is the Velvet domain. The short motif at 39–44 (ERARAC) is the Nuclear localization signal element. Pro residues-rich tracts occupy residues 314-323 (RPLPPAPGPA) and 330-341 (PAPPAPPAPPSH). 4 stretches are compositionally biased toward polar residues: residues 343-353 (PGYQSHLSFGS), 385-394 (HARNPSTSAE), 406-415 (RMSTERSSYP), and 448-458 (VAQSAAPRSQT). A PEST region spans residues 457–498 (QTPSSSLVPSLPPLKALSGDYPNNLSQSSSSTSQSPSHDLGA). 2 stretches are compositionally biased toward low complexity: residues 459 to 474 (PSSSLVPSLPPLKALS) and 482 to 493 (SQSSSSTSQSPS). Residues 513 to 525 (RSYEDSFGHDDRP) show a composition bias toward basic and acidic residues.

This sequence belongs to the velvet family. VeA subfamily. Component of the heterotrimeric velvet complex composed of laeA, veA and velB; VeA acting as a bridging protein between laeA and velB.

The protein localises to the nucleus. It localises to the cytoplasm. Its function is as follows. Component of the velvet transcription factor complex that controls sexual/asexual developmental ratio in response to light, promoting sexual development in the darkness while stimulating asexual sporulation under illumination. The velvet complex hat acts as a global regulator for secondary metabolite gene expression. Controls the expression of the cyclopiazonic acid, aflatrem, and aflatoxin gene clusters. Controls the expression of the sclerotium-specific pigment asparasone A gene cluster. Controls the expression of the aflavarin gene cluster. also controls the production of hydrolases and other extracellular proteins during growth on natural starch-based substrates. Regulates genes involved in the High Osmolarity Glycerol (HOG) signaling pathway. Required for the conidial and sclerotial density-dependent production. In Aspergillus flavus (strain ATCC 200026 / FGSC A1120 / IAM 13836 / NRRL 3357 / JCM 12722 / SRRC 167), this protein is Developmental and secondary metabolism regulator veA.